A 446-amino-acid chain; its full sequence is Mannosyltransferase KTR6 (446 aa).

Residues 1–8 (MHVLLSKK) are Cytoplasmic-facing. The chain crosses the membrane as a helical; Signal-anchor for type II membrane protein span at residues 9-29 (IARFLLISFVFVLALMVTINH). Positions 30–114 (PKTKQMSEQY…MVPSYINHRG (85 aa)) are stem region. The Lumenal segment spans residues 30-446 (PKTKQMSEQY…DKPEGWDRLP (417 aa)). N-linked (GlcNAc...) asparagine glycosylation is found at Asn82 and Asn98. The catalytic stretch occupies residues 115–446 (SPPKACFVSL…DKPEGWDRLP (332 aa)). Glu334 acts as the Nucleophile in catalysis.

This sequence belongs to the glycosyltransferase 15 family.

It localises to the membrane. It participates in protein modification; protein glycosylation. Glycosyltransferase that transfers an alpha-D-mannosyl residue from GDP-mannose into lipid-linked oligosaccharide, forming an alpha-(1-&gt;2)-D-mannosyl-D-mannose linkage. Required for addition of mannosylphosphate in yeast mannan. Recognizes any oligosaccharides with at least one alpha-1,2-linked mannobiose unit. The chain is Mannosyltransferase KTR6 (KTR6) from Saccharomyces cerevisiae (strain ATCC 204508 / S288c) (Baker's yeast).